The sequence spans 501 residues: Archaemetzincin-1 (501 aa).

Histidine 261 contributes to the Zn(2+) binding site. Catalysis depends on glutamate 262, which acts as the Proton acceptor. The Zn(2+) site is built by histidine 265, cysteine 272, cysteine 277, cysteine 296, and cysteine 299. The segment at 349–370 (DSGMGCESDTEPVTSPSEPVTP) is disordered.

It belongs to the peptidase M54 family. Zn(2+) is required as a cofactor.

Functionally, probable zinc metalloprotease. The sequence is that of Archaemetzincin-1 (Amz1) from Rattus norvegicus (Rat).